Consider the following 122-residue polypeptide: Acidic phospholipase A2 BlatPLA2 (122 aa).

Cystine bridges form between C26/C115, C28/C44, C43/C95, C49/C122, C50/C88, C57/C81, and C75/C86. Ca(2+) contacts are provided by Y27, G29, and G31. Residue H47 is part of the active site. D48 is a binding site for Ca(2+). The active site involves D89.

Belongs to the phospholipase A2 family. Group II subfamily. D49 sub-subfamily. As to quaternary structure, monomer. Requires Ca(2+) as cofactor. In terms of tissue distribution, expressed by the venom gland.

The protein resides in the secreted. It carries out the reaction a 1,2-diacyl-sn-glycero-3-phosphocholine + H2O = a 1-acyl-sn-glycero-3-phosphocholine + a fatty acid + H(+). Its function is as follows. Acidic phospholipase A2 (PLA2) that only causes a mild edema, when subcutaneously injected in the mice foot. PLA2 catalyzes the calcium-dependent hydrolysis of the 2-acyl groups in 3-sn-phosphoglycerides. This is Acidic phospholipase A2 BlatPLA2 from Bothriechis lateralis (Side-striped palm pitviper).